Consider the following 654-residue polypeptide: Acetyl-coenzyme A synthetase (654 aa).

CoA-binding positions include Arg-196 to Lys-199 and Thr-316. ATP contacts are provided by residues Gly-392–Pro-394, Asp-416–Thr-421, Asp-506, and Arg-521. Ser-529 contacts CoA. Position 532 (Arg-532) interacts with ATP. Val-543 and Val-548 together coordinate Mg(2+). At Lys-618 the chain carries N6-acetyllysine.

Belongs to the ATP-dependent AMP-binding enzyme family. Mg(2+) serves as cofactor. In terms of processing, acetylated. Deacetylation by the SIR2-homolog deacetylase activates the enzyme.

It carries out the reaction acetate + ATP + CoA = acetyl-CoA + AMP + diphosphate. In terms of biological role, catalyzes the conversion of acetate into acetyl-CoA (AcCoA), an essential intermediate at the junction of anabolic and catabolic pathways. AcsA undergoes a two-step reaction. In the first half reaction, AcsA combines acetate with ATP to form acetyl-adenylate (AcAMP) intermediate. In the second half reaction, it can then transfer the acetyl group from AcAMP to the sulfhydryl group of CoA, forming the product AcCoA. In Methylobacillus flagellatus (strain ATCC 51484 / DSM 6875 / VKM B-1610 / KT), this protein is Acetyl-coenzyme A synthetase.